The following is a 105-amino-acid chain: Large ribosomal subunit protein uL23 (105 aa).

It belongs to the universal ribosomal protein uL23 family. Part of the 50S ribosomal subunit. Contacts protein L29, and trigger factor when it is bound to the ribosome.

One of the early assembly proteins it binds 23S rRNA. One of the proteins that surrounds the polypeptide exit tunnel on the outside of the ribosome. Forms the main docking site for trigger factor binding to the ribosome. This chain is Large ribosomal subunit protein uL23, found in Chloroherpeton thalassium (strain ATCC 35110 / GB-78).